A 461-amino-acid polypeptide reads, in one-letter code: Argininosuccinate lyase (461 aa).

The protein belongs to the lyase 1 family. Argininosuccinate lyase subfamily.

It is found in the cytoplasm. It catalyses the reaction 2-(N(omega)-L-arginino)succinate = fumarate + L-arginine. The protein operates within amino-acid biosynthesis; L-arginine biosynthesis; L-arginine from L-ornithine and carbamoyl phosphate: step 3/3. In Chlorobium luteolum (strain DSM 273 / BCRC 81028 / 2530) (Pelodictyon luteolum), this protein is Argininosuccinate lyase.